The sequence spans 752 residues: Exocyst complex component EXO84B (752 aa).

Disordered stretches follow at residues 511-532 (QTGQ…NPEQ) and 724-752 (TKGN…HGSY). The span at 515 to 532 (RTDDLRRPLDRQNRNPEQ) shows a compositional bias: basic and acidic residues. Residues 733–752 (SPTASVSAQSVSSARSHGSY) are compositionally biased toward low complexity.

The protein belongs to the EXO84 family. In terms of assembly, the exocyst complex is composed of SEC3, SEC5, SEC6, SEC8, SEC10, EXO70A1 and EXO84B. Interacts with SEC6, SEC10, SEC15B and EXO70A1. Interacts with EXO70B1. Binds directly to B1L.

Its subcellular location is the cytoplasm. It localises to the cytosol. The protein localises to the perinuclear region. It is found in the cytoskeleton. The protein resides in the phragmoplast. Its subcellular location is the secreted. It localises to the cell wall. The protein localises to the cell membrane. Functionally, component of the exocyst complex involved in the docking of exocytic vesicles with fusion sites on the plasma membrane during regulated or polarized secretion. Involved in polarized cell growth and organ morphogenesis. During cytokinesis, involved in cell plate initiation, cell plate maturation and formation of new primary cell wall. Probable component of an exocyst subcomplex specifically involved in autophagy-related, Golgi-independent membrane traffic to the vacuole. Regulates autophagosome formation and autophagy-related Golgi-independent import into the vacuole. Mediates ABCG36/PEN3 outer-membrane polarity at the periphery of lateral root cap and root epidermal cells. The polypeptide is Exocyst complex component EXO84B (Arabidopsis thaliana (Mouse-ear cress)).